The following is a 637-amino-acid chain: 1-deoxy-D-xylulose-5-phosphate synthase (637 aa).

Residues His-76 and 117–119 (AHS) contribute to the thiamine diphosphate site. Asp-148 provides a ligand contact to Mg(2+). Thiamine diphosphate contacts are provided by residues 149 to 150 (GA), Asn-177, Tyr-287, and Glu-369. Asn-177 contributes to the Mg(2+) binding site.

It belongs to the transketolase family. DXPS subfamily. Homodimer. Mg(2+) serves as cofactor. Thiamine diphosphate is required as a cofactor.

The catalysed reaction is D-glyceraldehyde 3-phosphate + pyruvate + H(+) = 1-deoxy-D-xylulose 5-phosphate + CO2. It participates in metabolic intermediate biosynthesis; 1-deoxy-D-xylulose 5-phosphate biosynthesis; 1-deoxy-D-xylulose 5-phosphate from D-glyceraldehyde 3-phosphate and pyruvate: step 1/1. Its function is as follows. Catalyzes the acyloin condensation reaction between C atoms 2 and 3 of pyruvate and glyceraldehyde 3-phosphate to yield 1-deoxy-D-xylulose-5-phosphate (DXP). This chain is 1-deoxy-D-xylulose-5-phosphate synthase, found in Pelagibacter ubique (strain HTCC1062).